Reading from the N-terminus, the 24-residue chain is Arginine attenuator peptide (24 aa).

This sequence belongs to the arginine attenuator peptide family.

Arginine attenuator peptide (AAP) that has a regulatory role in the production of arginine-specific carbamoyl phosphate synthetase. Encoded by an upstream open reading frame (uORF) within the 5'-leader region of arginine-specific carbamoyl phosphate synthetase small chain (arg-2) mRNA, it attenuates the translation of the downstream arg-2 ORF. In the presence of high concentrations of arginine, ribosomes translating the uORF encoding AAP stall at the termination codon, resulting in reduced translation from the downstream arg-2 initiation codon. The sequence is that of Arginine attenuator peptide from Neurospora crassa (strain ATCC 24698 / 74-OR23-1A / CBS 708.71 / DSM 1257 / FGSC 987).